The chain runs to 105 residues: Early E3A 12.1 kDa protein (105 aa).

Belongs to the adenoviridae E3A-2 family.

Functionally, not yet known. The protein is Early E3A 12.1 kDa protein of Human adenovirus A serotype 12 (HAdV-12).